We begin with the raw amino-acid sequence, 282 residues long: Bifunctional protein FolD 2 (282 aa).

Residues 164 to 166 (GRS) and Ser-189 each bind NADP(+).

Belongs to the tetrahydrofolate dehydrogenase/cyclohydrolase family. Homodimer.

It carries out the reaction (6R)-5,10-methylene-5,6,7,8-tetrahydrofolate + NADP(+) = (6R)-5,10-methenyltetrahydrofolate + NADPH. The enzyme catalyses (6R)-5,10-methenyltetrahydrofolate + H2O = (6R)-10-formyltetrahydrofolate + H(+). The protein operates within one-carbon metabolism; tetrahydrofolate interconversion. In terms of biological role, catalyzes the oxidation of 5,10-methylenetetrahydrofolate to 5,10-methenyltetrahydrofolate and then the hydrolysis of 5,10-methenyltetrahydrofolate to 10-formyltetrahydrofolate. The polypeptide is Bifunctional protein FolD 2 (Lactobacillus johnsonii (strain CNCM I-12250 / La1 / NCC 533)).